Reading from the N-terminus, the 1099-residue chain is Carbamoyl phosphate synthase large chain (1099 aa).

A carboxyphosphate synthetic domain region spans residues 1–402; it reads MPKREDIKRI…ALGKALRSLE (402 aa). ATP-binding residues include Arg129, Arg169, Gly175, Gly176, Glu208, Val210, Glu215, Gly241, Ile242, His243, Gln285, and Glu299. In terms of domain architecture, ATP-grasp 1 spans 133–328; sequence KETMEKAGLE…IAKVAALLAV (196 aa). 3 residues coordinate Mg(2+): Gln285, Glu299, and Asn301. Mn(2+) contacts are provided by Gln285, Glu299, and Asn301. Residues 403–541 form an oligomerization domain region; it reads LDAAPKLDLE…STYNGVENEA (139 aa). The segment at 542–944 is carbamoyl phosphate synthetic domain; the sequence is VPSDREKIMI…AFAKAQIAAG (403 aa). The region spanning 666–857 is the ATP-grasp 2 domain; it reads AKLLKQIGLK…VARIAAKIMV (192 aa). Residues Arg702, Lys741, Leu743, Glu748, Gly773, Val774, His775, Ser776, Gln816, and Glu828 each coordinate ATP. Gln816, Glu828, and Asn830 together coordinate Mg(2+). Residues Gln816, Glu828, and Asn830 each contribute to the Mn(2+) site. The MGS-like domain maps to 945–1099; that stretch reads NPLPTTGAIL…VRRLTDTWKM (155 aa). Positions 945–1099 are allosteric domain; sequence NPLPTTGAIL…VRRLTDTWKM (155 aa).

This sequence belongs to the CarB family. As to quaternary structure, composed of two chains; the small (or glutamine) chain promotes the hydrolysis of glutamine to ammonia, which is used by the large (or ammonia) chain to synthesize carbamoyl phosphate. Tetramer of heterodimers (alpha,beta)4. It depends on Mg(2+) as a cofactor. Requires Mn(2+) as cofactor.

The enzyme catalyses hydrogencarbonate + L-glutamine + 2 ATP + H2O = carbamoyl phosphate + L-glutamate + 2 ADP + phosphate + 2 H(+). It carries out the reaction hydrogencarbonate + NH4(+) + 2 ATP = carbamoyl phosphate + 2 ADP + phosphate + 2 H(+). It functions in the pathway amino-acid biosynthesis; L-arginine biosynthesis; carbamoyl phosphate from bicarbonate: step 1/1. It participates in pyrimidine metabolism; UMP biosynthesis via de novo pathway; (S)-dihydroorotate from bicarbonate: step 1/3. Its function is as follows. Large subunit of the glutamine-dependent carbamoyl phosphate synthetase (CPSase). CPSase catalyzes the formation of carbamoyl phosphate from the ammonia moiety of glutamine, carbonate, and phosphate donated by ATP, constituting the first step of 2 biosynthetic pathways, one leading to arginine and/or urea and the other to pyrimidine nucleotides. The large subunit (synthetase) binds the substrates ammonia (free or transferred from glutamine from the small subunit), hydrogencarbonate and ATP and carries out an ATP-coupled ligase reaction, activating hydrogencarbonate by forming carboxy phosphate which reacts with ammonia to form carbamoyl phosphate. This chain is Carbamoyl phosphate synthase large chain, found in Thermotoga sp. (strain RQ2).